Here is a 91-residue protein sequence, read N- to C-terminus: Small ribosomal subunit protein uS19 (91 aa).

Belongs to the universal ribosomal protein uS19 family.

Protein S19 forms a complex with S13 that binds strongly to the 16S ribosomal RNA. The sequence is that of Small ribosomal subunit protein uS19 from Synechococcus sp. (strain CC9311).